A 452-amino-acid chain; its full sequence is Tryptophan biosynthesis protein TrpCF (452 aa).

The segment at 1–256 (MQTVLAKIVA…AAVRRVLLGE (256 aa)) is indole-3-glycerol phosphate synthase. Residues 257–452 (NKVCGLTRAQ…ASVFQTLRAY (196 aa)) form an N-(5'-phosphoribosyl)anthranilate isomerase region.

In the N-terminal section; belongs to the TrpC family. This sequence in the C-terminal section; belongs to the TrpF family. Monomer.

It catalyses the reaction N-(5-phospho-beta-D-ribosyl)anthranilate = 1-(2-carboxyphenylamino)-1-deoxy-D-ribulose 5-phosphate. The catalysed reaction is 1-(2-carboxyphenylamino)-1-deoxy-D-ribulose 5-phosphate + H(+) = (1S,2R)-1-C-(indol-3-yl)glycerol 3-phosphate + CO2 + H2O. It functions in the pathway amino-acid biosynthesis; L-tryptophan biosynthesis; L-tryptophan from chorismate: step 3/5. The protein operates within amino-acid biosynthesis; L-tryptophan biosynthesis; L-tryptophan from chorismate: step 4/5. Functionally, bifunctional enzyme that catalyzes two sequential steps of tryptophan biosynthetic pathway. The first reaction is catalyzed by the isomerase, coded by the TrpF domain; the second reaction is catalyzed by the synthase, coded by the TrpC domain. This is Tryptophan biosynthesis protein TrpCF (trpC) from Salmonella typhimurium (strain LT2 / SGSC1412 / ATCC 700720).